A 338-amino-acid polypeptide reads, in one-letter code: Methionine import ATP-binding protein MetN 1 (338 aa).

Positions 2-241 (IELHQVSKSF…AKHATTKRFV (240 aa)) constitute an ABC transporter domain. An ATP-binding site is contributed by 38-45 (GYSGAGKS).

Belongs to the ABC transporter superfamily. Methionine importer (TC 3.A.1.24) family. As to quaternary structure, the complex is composed of two ATP-binding proteins (MetN), two transmembrane proteins (MetI) and a solute-binding protein (MetQ).

It is found in the cell membrane. The enzyme catalyses L-methionine(out) + ATP + H2O = L-methionine(in) + ADP + phosphate + H(+). It catalyses the reaction D-methionine(out) + ATP + H2O = D-methionine(in) + ADP + phosphate + H(+). Its function is as follows. Part of the ABC transporter complex MetNIQ involved in methionine import. Responsible for energy coupling to the transport system. The protein is Methionine import ATP-binding protein MetN 1 of Listeria innocua serovar 6a (strain ATCC BAA-680 / CLIP 11262).